The sequence spans 332 residues: Very-long-chain 3-oxoacyl-CoA reductase (332 aa).

A helical transmembrane segment spans residues 15–35 (GQWALAGIGALYVATRVGAFL). NADP(+) contacts are provided by Val60, Asp115, Asp123, Asn142, Lys177, Tyr209, Lys213, Val242, and Thr244. Residue Tyr209 is the Proton donor of the active site. The active-site Lowers pKa of active site Tyr is Lys213.

This sequence belongs to the short-chain dehydrogenases/reductases (SDR) family.

It localises to the endoplasmic reticulum membrane. It carries out the reaction a very-long-chain (3R)-3-hydroxyacyl-CoA + NADP(+) = a very-long-chain 3-oxoacyl-CoA + NADPH + H(+). It functions in the pathway lipid metabolism; fatty acid biosynthesis. Functionally, component of the microsomal membrane bound fatty acid elongation system, which produces the 26-carbon very long-chain fatty acids (VLCFA) from palmitate. Catalyzes the reduction of the 3-ketoacyl-CoA intermediate that is formed in each cycle of fatty acid elongation. VLCFAs serve as precursors for ceramide and sphingolipids. The sequence is that of Very-long-chain 3-oxoacyl-CoA reductase from Neurospora crassa (strain ATCC 24698 / 74-OR23-1A / CBS 708.71 / DSM 1257 / FGSC 987).